The chain runs to 280 residues: Virginiamycin B lyase (280 aa).

His-215 contacts substrate. Glu-254 is a binding site for Mg(2+). The active-site Proton acceptor is the His-256. Glu-271 lines the Mg(2+) pocket.

This sequence belongs to the Vgb family. In terms of assembly, monomer. The cofactor is Mg(2+).

Functionally, inactivates the type B streptogramin antibiotics by linearizing the lactone ring at the ester linkage, generating a free phenylglycine carboxylate and converting the threonyl moiety into 2-amino-butenoic acid. This is Virginiamycin B lyase from Mycobacterium sp. (strain KMS).